Consider the following 255-residue polypeptide: Triosephosphate isomerase (255 aa).

Residue asparagine 9–lysine 11 participates in substrate binding. Histidine 95 (electrophile) is an active-site residue. Glutamate 167 acts as the Proton acceptor in catalysis. Residues glycine 173, serine 212, and glycine 233–glycine 234 contribute to the substrate site.

This sequence belongs to the triosephosphate isomerase family. As to quaternary structure, homodimer.

The protein localises to the cytoplasm. The enzyme catalyses D-glyceraldehyde 3-phosphate = dihydroxyacetone phosphate. Its pathway is carbohydrate biosynthesis; gluconeogenesis. The protein operates within carbohydrate degradation; glycolysis; D-glyceraldehyde 3-phosphate from glycerone phosphate: step 1/1. In terms of biological role, involved in the gluconeogenesis. Catalyzes stereospecifically the conversion of dihydroxyacetone phosphate (DHAP) to D-glyceraldehyde-3-phosphate (G3P). The sequence is that of Triosephosphate isomerase from Yersinia pseudotuberculosis serotype O:1b (strain IP 31758).